We begin with the raw amino-acid sequence, 78 residues long: Putative membrane protein insertion efficiency factor (78 aa).

This sequence belongs to the UPF0161 family.

The protein resides in the cell inner membrane. In terms of biological role, could be involved in insertion of integral membrane proteins into the membrane. This chain is Putative membrane protein insertion efficiency factor, found in Thiobacillus denitrificans (strain ATCC 25259 / T1).